The primary structure comprises 129 residues: Small ribosomal subunit protein uS11 (129 aa).

The interval 107–129 is disordered; the sequence is IEDVTPVPHDSIRGKGGRRGRRV.

It belongs to the universal ribosomal protein uS11 family. In terms of assembly, part of the 30S ribosomal subunit.

Its function is as follows. Located on the platform of the 30S subunit. This Methanoculleus marisnigri (strain ATCC 35101 / DSM 1498 / JR1) protein is Small ribosomal subunit protein uS11.